Here is a 156-residue protein sequence, read N- to C-terminus: 6,7-dimethyl-8-ribityllumazine synthase (156 aa).

Residues phenylalanine 25, 59–61 (AFE), and 83–85 (AVI) each bind 5-amino-6-(D-ribitylamino)uracil. A (2S)-2-hydroxy-3-oxobutyl phosphate-binding site is contributed by 88 to 89 (AT). Residue histidine 91 is the Proton donor of the active site. Phenylalanine 116 is a 5-amino-6-(D-ribitylamino)uracil binding site. Arginine 130 lines the (2S)-2-hydroxy-3-oxobutyl phosphate pocket.

This sequence belongs to the DMRL synthase family.

It catalyses the reaction (2S)-2-hydroxy-3-oxobutyl phosphate + 5-amino-6-(D-ribitylamino)uracil = 6,7-dimethyl-8-(1-D-ribityl)lumazine + phosphate + 2 H2O + H(+). It functions in the pathway cofactor biosynthesis; riboflavin biosynthesis; riboflavin from 2-hydroxy-3-oxobutyl phosphate and 5-amino-6-(D-ribitylamino)uracil: step 1/2. Its function is as follows. Catalyzes the formation of 6,7-dimethyl-8-ribityllumazine by condensation of 5-amino-6-(D-ribitylamino)uracil with 3,4-dihydroxy-2-butanone 4-phosphate. This is the penultimate step in the biosynthesis of riboflavin. The polypeptide is 6,7-dimethyl-8-ribityllumazine synthase (Nitratidesulfovibrio vulgaris (strain DSM 19637 / Miyazaki F) (Desulfovibrio vulgaris)).